The chain runs to 187 residues: Interferon beta (187 aa).

An N-terminal signal peptide occupies residues 1–21 (MTSRSLLPFVLSLLLPRIIMA). Phosphotyrosine is present on tyrosine 24. Cysteines 53 and 162 form a disulfide. Asparagine 76, asparagine 95, asparagine 132, and asparagine 158 each carry an N-linked (GlcNAc...) asparagine glycan.

This sequence belongs to the alpha/beta interferon family. Monomer.

Its subcellular location is the secreted. In terms of biological role, type I interferon cytokine that plays a key role in the innate immune response to infection, developing tumors and other inflammatory stimuli. Signals via binding to high-affinity (IFNAR2) and low-affinity (IFNAR1) heterodimeric receptor, activating the canonical Jak-STAT signaling pathway resulting in transcriptional activation or repression of interferon-regulated genes that encode the effectors of the interferon response, such as antiviral proteins, regulators of cell proliferation and differentiation, and immunoregulatory proteins. Signals mostly via binding to a IFNAR1-IFNAR2 heterodimeric receptor, but can also function with IFNAR1 alone and independently of Jak-STAT pathways. Elicits a wide variety of responses, including antiviral and antibacterial activities, and can regulate the development of B-cells, myelopoiesis and lipopolysaccharide (LPS)-inducible production of tumor necrosis factor. Plays a role in neuronal homeostasis by regulating dopamine turnover and protecting dopaminergic neurons: acts by promoting neuronal autophagy and alpha-synuclein clearance, thereby preventing dopaminergic neuron loss. IFNB1 is more potent than interferon-alpha (IFN-alpha) in inducing the apoptotic and antiproliferative pathways required for control of tumor cell growth. The polypeptide is Interferon beta (IFNB1) (Tachyglossus aculeatus aculeatus (Southeast Australian short-beaked echidna)).